Here is a 300-residue protein sequence, read N- to C-terminus: Ribosomal protein L11 methyltransferase (300 aa).

Residues threonine 152, glycine 173, aspartate 195, and asparagine 234 each coordinate S-adenosyl-L-methionine.

It belongs to the methyltransferase superfamily. PrmA family.

It localises to the cytoplasm. It carries out the reaction L-lysyl-[protein] + 3 S-adenosyl-L-methionine = N(6),N(6),N(6)-trimethyl-L-lysyl-[protein] + 3 S-adenosyl-L-homocysteine + 3 H(+). Methylates ribosomal protein L11. This Burkholderia orbicola (strain MC0-3) protein is Ribosomal protein L11 methyltransferase.